A 501-amino-acid polypeptide reads, in one-letter code: ATP synthase subunit alpha (501 aa).

Position 169–176 (G169–T176) interacts with ATP.

Belongs to the ATPase alpha/beta chains family. In terms of assembly, F-type ATPases have 2 components, CF(1) - the catalytic core - and CF(0) - the membrane proton channel. CF(1) has five subunits: alpha(3), beta(3), gamma(1), delta(1), epsilon(1). CF(0) has three main subunits: a(1), b(2) and c(9-12). The alpha and beta chains form an alternating ring which encloses part of the gamma chain. CF(1) is attached to CF(0) by a central stalk formed by the gamma and epsilon chains, while a peripheral stalk is formed by the delta and b chains.

Its subcellular location is the cell membrane. The enzyme catalyses ATP + H2O + 4 H(+)(in) = ADP + phosphate + 5 H(+)(out). Functionally, produces ATP from ADP in the presence of a proton gradient across the membrane. The alpha chain is a regulatory subunit. The protein is ATP synthase subunit alpha of Streptococcus uberis (strain ATCC BAA-854 / 0140J).